The following is a 698-amino-acid chain: DNA ligase (698 aa).

NAD(+) is bound by residues 40–44, 89–90, and Glu123; these read DGEYD and SL. Residue Lys125 is the N6-AMP-lysine intermediate of the active site. 4 residues coordinate NAD(+): Arg146, Glu184, Lys300, and Lys324. Residues Cys418, Cys421, Cys436, and Cys442 each contribute to the Zn(2+) site. A BRCT domain is found at 620-698; sequence AGDSPLAGKT…EAEFRAMSGG (79 aa).

The protein belongs to the NAD-dependent DNA ligase family. LigA subfamily. Mg(2+) is required as a cofactor. It depends on Mn(2+) as a cofactor.

It carries out the reaction NAD(+) + (deoxyribonucleotide)n-3'-hydroxyl + 5'-phospho-(deoxyribonucleotide)m = (deoxyribonucleotide)n+m + AMP + beta-nicotinamide D-nucleotide.. In terms of biological role, DNA ligase that catalyzes the formation of phosphodiester linkages between 5'-phosphoryl and 3'-hydroxyl groups in double-stranded DNA using NAD as a coenzyme and as the energy source for the reaction. It is essential for DNA replication and repair of damaged DNA. The polypeptide is DNA ligase (Rhodospirillum rubrum (strain ATCC 11170 / ATH 1.1.1 / DSM 467 / LMG 4362 / NCIMB 8255 / S1)).